Reading from the N-terminus, the 417-residue chain is Multifunctional CCA protein (417 aa).

ATP is bound by residues G8 and R11. CTP contacts are provided by G8 and R11. Positions 21 and 23 each coordinate Mg(2+). ATP is bound by residues R91, R137, and R140. CTP-binding residues include R91, R137, and R140. Positions 225–326 constitute an HD domain; that stretch reads SGIHTLMTLQ…LNVLKKTDAF (102 aa).

Belongs to the tRNA nucleotidyltransferase/poly(A) polymerase family. Bacterial CCA-adding enzyme type 1 subfamily. Monomer. Can also form homodimers and oligomers. The cofactor is Mg(2+). It depends on Ni(2+) as a cofactor.

It carries out the reaction a tRNA precursor + 2 CTP + ATP = a tRNA with a 3' CCA end + 3 diphosphate. It catalyses the reaction a tRNA with a 3' CCA end + 2 CTP + ATP = a tRNA with a 3' CCACCA end + 3 diphosphate. Its function is as follows. Catalyzes the addition and repair of the essential 3'-terminal CCA sequence in tRNAs without using a nucleic acid template. Adds these three nucleotides in the order of C, C, and A to the tRNA nucleotide-73, using CTP and ATP as substrates and producing inorganic pyrophosphate. tRNA 3'-terminal CCA addition is required both for tRNA processing and repair. Also involved in tRNA surveillance by mediating tandem CCA addition to generate a CCACCA at the 3' terminus of unstable tRNAs. While stable tRNAs receive only 3'-terminal CCA, unstable tRNAs are marked with CCACCA and rapidly degraded. This chain is Multifunctional CCA protein, found in Neisseria meningitidis serogroup C (strain 053442).